The primary structure comprises 378 residues: Bifunctional enzyme IspD/IspF (378 aa).

A 2-C-methyl-D-erythritol 4-phosphate cytidylyltransferase region spans residues 1 to 222 (MTETVAIIVA…RLLSPTGAPR (222 aa)). Positions 222-378 (RIGKGYDVHE…EAVALLMPKG (157 aa)) are 2-C-methyl-D-erythritol 2,4-cyclodiphosphate synthase. Residues aspartate 228 and histidine 230 each contribute to the a divalent metal cation site. Residues 228 to 230 (DVH) and 254 to 255 (HS) each bind 4-CDP-2-C-methyl-D-erythritol 2-phosphate. Histidine 262 lines the a divalent metal cation pocket. Residues 276–278 (DIG), 352–355 (TTTE), phenylalanine 359, and arginine 362 each bind 4-CDP-2-C-methyl-D-erythritol 2-phosphate.

In the N-terminal section; belongs to the IspD/TarI cytidylyltransferase family. IspD subfamily. The protein in the C-terminal section; belongs to the IspF family. Requires a divalent metal cation as cofactor.

It catalyses the reaction 2-C-methyl-D-erythritol 4-phosphate + CTP + H(+) = 4-CDP-2-C-methyl-D-erythritol + diphosphate. The enzyme catalyses 4-CDP-2-C-methyl-D-erythritol 2-phosphate = 2-C-methyl-D-erythritol 2,4-cyclic diphosphate + CMP. The protein operates within isoprenoid biosynthesis; isopentenyl diphosphate biosynthesis via DXP pathway; isopentenyl diphosphate from 1-deoxy-D-xylulose 5-phosphate: step 2/6. Its pathway is isoprenoid biosynthesis; isopentenyl diphosphate biosynthesis via DXP pathway; isopentenyl diphosphate from 1-deoxy-D-xylulose 5-phosphate: step 4/6. Functionally, bifunctional enzyme that catalyzes the formation of 4-diphosphocytidyl-2-C-methyl-D-erythritol from CTP and 2-C-methyl-D-erythritol 4-phosphate (MEP) (IspD), and catalyzes the conversion of 4-diphosphocytidyl-2-C-methyl-D-erythritol 2-phosphate (CDP-ME2P) to 2-C-methyl-D-erythritol 2,4-cyclodiphosphate (ME-CPP) with a corresponding release of cytidine 5-monophosphate (CMP) (IspF). In Hyphomonas neptunium (strain ATCC 15444), this protein is Bifunctional enzyme IspD/IspF.